A 364-amino-acid polypeptide reads, in one-letter code: Fructose-bisphosphate aldolase A (364 aa).

Y5 is modified (phosphotyrosine). Phosphothreonine is present on T9. Phosphoserine is present on residues S36 and S39. N6-acetyllysine; alternate is present on K42. Residue K42 forms a Glycyl lysine isopeptide (Lys-Gly) (interchain with G-Cter in SUMO1); alternate linkage. A Glycyl lysine isopeptide (Lys-Gly) (interchain with G-Cter in SUMO2); alternate cross-link involves residue K42. Residue R43 coordinates beta-D-fructose 1,6-bisphosphate. S46 carries the phosphoserine modification. K99 is modified (N6-(2-hydroxyisobutyryl)lysine). The residue at position 108 (K108) is an N6-acetyllysine. The residue at position 111 (K111) is an N6-acetyllysine; alternate. At K111 the chain carries N6-malonyllysine; alternate. At S132 the chain carries Phosphoserine. K147 bears the N6-(2-hydroxyisobutyryl)lysine mark. E188 functions as the Proton acceptor in the catalytic mechanism. Catalysis depends on K230, which acts as the Schiff-base intermediate with dihydroxyacetone-P. S272 is subject to Phosphoserine. Beta-D-fructose 1,6-bisphosphate contacts are provided by residues 272 to 274 (SGG), S301, and R304. Position 312 is an N6-malonyllysine (K312). K330 carries the post-translational modification N6-acetyllysine.

This sequence belongs to the class I fructose-bisphosphate aldolase family. As to quaternary structure, homotetramer. Interacts with SNX9 and WAS. Interacts with FBP2; the interaction blocks FBP2 inhibition by physiological concentrations of AMP and reduces inhibition by Ca(2+). In terms of tissue distribution, expressed in muscle, brain and hepatoma cells.

The protein localises to the cytoplasm. It localises to the myofibril. Its subcellular location is the sarcomere. The protein resides in the i band. It is found in the m line. It catalyses the reaction beta-D-fructose 1,6-bisphosphate = D-glyceraldehyde 3-phosphate + dihydroxyacetone phosphate. Its pathway is carbohydrate degradation; glycolysis; D-glyceraldehyde 3-phosphate and glycerone phosphate from D-glucose: step 4/4. Catalyzes the reversible conversion of beta-D-fructose 1,6-bisphosphate (FBP) into two triose phosphate and plays a key role in glycolysis and gluconeogenesis. In addition, may also function as scaffolding protein. The polypeptide is Fructose-bisphosphate aldolase A (Aldoa) (Rattus norvegicus (Rat)).